The primary structure comprises 308 residues: Ribosomal RNA small subunit methyltransferase H (308 aa).

S-adenosyl-L-methionine-binding positions include 46 to 48, Asp63, Tyr87, Asp108, and Gln115; that span reads AGH. The tract at residues 269–308 is disordered; it reads TKRPVEASEEERGRNPRARSAKLRAAEKVAAPEGLPEVEV. Residues 271–282 are compositionally biased toward basic and acidic residues; sequence RPVEASEEERGR.

Belongs to the methyltransferase superfamily. RsmH family.

It localises to the cytoplasm. The enzyme catalyses cytidine(1402) in 16S rRNA + S-adenosyl-L-methionine = N(4)-methylcytidine(1402) in 16S rRNA + S-adenosyl-L-homocysteine + H(+). In terms of biological role, specifically methylates the N4 position of cytidine in position 1402 (C1402) of 16S rRNA. This chain is Ribosomal RNA small subunit methyltransferase H, found in Deinococcus geothermalis (strain DSM 11300 / CIP 105573 / AG-3a).